A 130-amino-acid polypeptide reads, in one-letter code: Early E3B 14.5 kDa protein (130 aa).

A signal peptide spans 1–19; the sequence is MKRIVTFVLLIFCALPVLC. Residues 53–77 traverse the membrane as a helical segment; it reads AWLYAIISVMVFCSTIFALAIYPYL.

Belongs to the adenoviridae E3_14 family. Post-translationally, phosphorylated on serine; O-glycosylated, but not N-glycosylated.

The protein localises to the host membrane. In terms of biological role, down-regulates the EGF receptor and prevents cytolysis by TNF. The chain is Early E3B 14.5 kDa protein from Human adenovirus C serotype 6 (HAdV-6).